Reading from the N-terminus, the 218-residue chain is uncharacterized protein (218 aa).

3 disordered regions span residues 30–71, 93–120, and 133–209; these read FSHR…RSPP, SGRGGGGGGGGGARTGGGEGEDRRPRPD, and MEVE…PGFP. Residues 43-71 show a composition bias toward low complexity; sequence PGAPAVVPAPVSAPRPASSPARSESRSPP. The segment covering 94–110 has biased composition (gly residues); that stretch reads GRGGGGGGGGGARTGGG. Positions 138–148 are enriched in pro residues; sequence PPHPPPQPQVC. A compositionally biased stretch (gly residues) spans 156 to 171; sequence PGHGRAGLPEGKGPGG. Low complexity predominate over residues 191 to 209; it reads RAPSPAAPRRGRLPAPGFP.

This is an uncharacterized protein from Homo sapiens (Human).